We begin with the raw amino-acid sequence, 98 residues long: Small ribosomal subunit protein bS6 (98 aa).

It belongs to the bacterial ribosomal protein bS6 family.

Functionally, binds together with bS18 to 16S ribosomal RNA. This chain is Small ribosomal subunit protein bS6, found in Staphylococcus aureus (strain NCTC 8325 / PS 47).